The sequence spans 465 residues: Plasma alpha-L-fucosidase (465 aa).

Positions 1-26 (MRPQELPRLAFPLLLLLLLPPPPCPA) are cleaved as a signal peptide. N-linked (GlcNAc...) asparagine glycosylation is found at asparagine 169 and asparagine 237. Serine 299 carries the phosphoserine modification. An N-linked (GlcNAc...) asparagine glycan is attached at asparagine 375.

The protein belongs to the glycosyl hydrolase 29 family. Homotetramer.

The protein localises to the secreted. It carries out the reaction an alpha-L-fucoside + H2O = L-fucose + an alcohol. Alpha-L-fucosidase is responsible for hydrolyzing the alpha-1,6-linked fucose joined to the reducing-end N-acetylglucosamine of the carbohydrate moieties of glycoproteins. The protein is Plasma alpha-L-fucosidase (FUCA2) of Pongo abelii (Sumatran orangutan).